Here is a 359-residue protein sequence, read N- to C-terminus: Isopentenyl-diphosphate delta-isomerase (359 aa).

A substrate-binding site is contributed by 11 to 12 (RK). Residues Ser68, 69–71 (GMT), Ser99, and Asn127 each bind FMN. A substrate-binding site is contributed by 99 to 101 (SQR). Gln163 is a binding site for substrate. Residue Glu164 participates in Mg(2+) binding. Residues Lys199, Thr229, 278 to 280 (GIR), and 299 to 300 (AL) each bind FMN.

This sequence belongs to the IPP isomerase type 2 family. Homooctamer. Dimer of tetramers. The cofactor is FMN. NADPH serves as cofactor. Mg(2+) is required as a cofactor.

The protein resides in the cytoplasm. The enzyme catalyses isopentenyl diphosphate = dimethylallyl diphosphate. Inhibited by 3,4-epoxy-3-methylbutyl diphosphate (EIPP). In terms of biological role, involved in the biosynthesis of isoprenoids. Catalyzes the 1,3-allylic rearrangement of the homoallylic substrate isopentenyl (IPP) to its allylic isomer, dimethylallyl diphosphate (DMAPP). The chain is Isopentenyl-diphosphate delta-isomerase from Methanocaldococcus jannaschii (strain ATCC 43067 / DSM 2661 / JAL-1 / JCM 10045 / NBRC 100440) (Methanococcus jannaschii).